Here is a 278-residue protein sequence, read N- to C-terminus: PILR alpha-associated neural protein (278 aa).

Positions 1–27 are cleaved as a signal peptide; that stretch reads MWSAQLLSQLLPLWPLLLLSVLPPAQG. The disordered stretch occupies residues 25-93; that stretch reads AQGSSHRSPP…PSGFEEGPPS (69 aa). Topologically, residues 28-174 are extracellular; that stretch reads SSHRSPPAPA…FGGRGEGVDP (147 aa). A glycan (O-linked (GalNAc...) threonine) is linked at T136. Residues 175–195 form a helical membrane-spanning segment; the sequence is QLYVTITISIIIVLVATGIIF. Topologically, residues 196-278 are cytoplasmic; that stretch reads KFCWDRSQKR…QLNRIPLVNL (83 aa). The interval 206-278 is disordered; it reads RRPSGQQGAL…QLNRIPLVNL (73 aa). Polar residues predominate over residues 209–225; that stretch reads SGQQGALRQEESQQPLT.

O-glycosylation at Thr-136 is essential for recognition by PILRA. As to expression, mainly expressed in brain and spinal cord. Weak expression also detected in heart, kidney, spleen and lymph node. Virtually no expression detected in liver and embryo relative to brain.

It is found in the membrane. In terms of biological role, acts as a ligand for PILRA in neuronal tissues, where it may be involved in immune regulation. The polypeptide is PILR alpha-associated neural protein (Pianp) (Mus musculus (Mouse)).